The primary structure comprises 35 residues: Dermonecrotic toxin LrSicTox-alphaI-1 (35 aa).

Histidine 11 is a catalytic residue. Mg(2+) is bound at residue aspartate 33.

This sequence belongs to the arthropod phospholipase D family. Class II subfamily. Mg(2+) serves as cofactor. In terms of processing, contains 2 disulfide bonds. In terms of tissue distribution, expressed by the venom gland.

Its subcellular location is the secreted. The catalysed reaction is an N-(acyl)-sphingosylphosphocholine = an N-(acyl)-sphingosyl-1,3-cyclic phosphate + choline. It carries out the reaction an N-(acyl)-sphingosylphosphoethanolamine = an N-(acyl)-sphingosyl-1,3-cyclic phosphate + ethanolamine. It catalyses the reaction a 1-acyl-sn-glycero-3-phosphocholine = a 1-acyl-sn-glycero-2,3-cyclic phosphate + choline. The enzyme catalyses a 1-acyl-sn-glycero-3-phosphoethanolamine = a 1-acyl-sn-glycero-2,3-cyclic phosphate + ethanolamine. Its function is as follows. Dermonecrotic toxins cleave the phosphodiester linkage between the phosphate and headgroup of certain phospholipids (sphingolipid and lysolipid substrates), forming an alcohol (often choline) and a cyclic phosphate. This toxin acts on sphingomyelin (SM). It may also act on ceramide phosphoethanolamine (CPE), lysophosphatidylcholine (LPC) and lysophosphatidylethanolamine (LPE), but not on lysophosphatidylserine (LPS), and lysophosphatidylglycerol (LPG). It acts by transphosphatidylation, releasing exclusively cyclic phosphate products as second products. Induces dermonecrosis, hemolysis, increased vascular permeability, edema, inflammatory response, and platelet aggregation. The sequence is that of Dermonecrotic toxin LrSicTox-alphaI-1 from Loxosceles reclusa (Brown recluse spider).